The primary structure comprises 296 residues: ATP synthase gamma chain (296 aa).

Belongs to the ATPase gamma chain family. F-type ATPases have 2 components, CF(1) - the catalytic core - and CF(0) - the membrane proton channel. CF(1) has five subunits: alpha(3), beta(3), gamma(1), delta(1), epsilon(1). CF(0) has three main subunits: a, b and c.

It is found in the cell inner membrane. Produces ATP from ADP in the presence of a proton gradient across the membrane. The gamma chain is believed to be important in regulating ATPase activity and the flow of protons through the CF(0) complex. The protein is ATP synthase gamma chain of Jannaschia sp. (strain CCS1).